The primary structure comprises 104 residues: Small ribosomal subunit protein bS18c (104 aa).

Belongs to the bacterial ribosomal protein bS18 family. As to quaternary structure, part of the 30S ribosomal subunit.

Its subcellular location is the plastid. The protein localises to the chloroplast. The polypeptide is Small ribosomal subunit protein bS18c (Lotus japonicus (Lotus corniculatus var. japonicus)).